The chain runs to 130 residues: Small ribosomal subunit protein eS17 (130 aa).

This sequence belongs to the eukaryotic ribosomal protein eS17 family.

This is Small ribosomal subunit protein eS17 (RPS17) from Theileria parva (East coast fever infection agent).